A 47-amino-acid chain; its full sequence is Large ribosomal subunit protein eL40 (47 aa).

This sequence belongs to the eukaryotic ribosomal protein eL40 family.

This chain is Large ribosomal subunit protein eL40, found in Methanococcus aeolicus (strain ATCC BAA-1280 / DSM 17508 / OCM 812 / Nankai-3).